The sequence spans 424 residues: PtdIns3K complex I subunit atg38 (424 aa).

Residues 50–78 adopt a coiled-coil conformation; that stretch reads LIKRCANNQIEELMVRIRELRESLPNKQT. A required for interaction with atg8 region spans residues 73-212; that stretch reads LPNKQTPISM…DPAYQNTNEQ (140 aa). The short motif at 178 to 181 is the AIM element; the sequence is FLIV. Residues 268-284 show a composition bias toward basic and acidic residues; the sequence is LSEEEMGRSHKREESFK. The tract at residues 268-299 is disordered; the sequence is LSEEEMGRSHKREESFKRAFGHASSSESSIGE. Residues 390-420 adopt a coiled-coil conformation; sequence TVDSQLKIKQLETQIATLQKQLEQFQTSTLD.

The protein belongs to the ATG38 family. Component of the autophagy-specific vps34 PI3-kinase complex I composed of vps15, atg6, pik3/vps34, atg14 and atg38. Interacts (via AIM motif) with atg8; the interaction is direct and leads to recruitment of the autophagy-specific vps34 PI3-kinase complex I to the phagophore assembly site.

The protein localises to the preautophagosomal structure membrane. Its subcellular location is the cytoplasm. It localises to the cytosol. In terms of biological role, functions as a part of the autophagy-specific VPS34 PI3-kinase complex I that plays a role in autophagosome assembly. This complex is essential to recruit the atg8-phosphatidylinositol conjugate and the atg12-atg5 conjugate to the pre-autophagosomal structure. By binding to atg8 at the phagophore assembly site, atg38 helps establish a positive feedback loop for recruitment of phagophore assembly proteins, including atg8. The sequence is that of PtdIns3K complex I subunit atg38 from Schizosaccharomyces pombe (strain 972 / ATCC 24843) (Fission yeast).